The following is a 114-amino-acid chain: Protein S40-2 (114 aa).

Residues 23-50 (RYTKLYNSRNDEKKGTRRHETAEKTSPV) form a disordered region. Over residues 31–45 (RNDEKKGTRRHETAE) the composition is skewed to basic and acidic residues.

This sequence belongs to the senescence regulator S40 family.

Its subcellular location is the cytoplasm. The sequence is that of Protein S40-2 from Arabidopsis thaliana (Mouse-ear cress).